Reading from the N-terminus, the 101-residue chain is Carboxysome shell vertex protein CcmL (101 aa).

One can recognise a BMV domain in the interval M1–D84.

The protein belongs to the CcmL/EutN family. CcmL subfamily. As to quaternary structure, homopentamer. Interacts with full-length CcmM.

It is found in the carboxysome. Functionally, probably forms vertices in the carboxysome, a polyhedral inclusion where RuBisCO (ribulose bisphosphate carboxylase, rbcL-rbcS) is sequestered. Has been modeled to induce curvature upon insertion into an otherwise flat hexagonal molecular layer of CcmK subunits. The protein is Carboxysome shell vertex protein CcmL of Nostoc sp. (strain PCC 7120 / SAG 25.82 / UTEX 2576).